A 399-amino-acid polypeptide reads, in one-letter code: Chorismate synthase (399 aa).

Residues arginine 40 and arginine 46 each contribute to the NADP(+) site. Residues arginine 129–serine 131, glutamine 257–alanine 258, glycine 302, lysine 317–serine 321, and arginine 343 each bind FMN.

It belongs to the chorismate synthase family. In terms of assembly, homotetramer. Requires FMNH2 as cofactor.

The catalysed reaction is 5-O-(1-carboxyvinyl)-3-phosphoshikimate = chorismate + phosphate. It functions in the pathway metabolic intermediate biosynthesis; chorismate biosynthesis; chorismate from D-erythrose 4-phosphate and phosphoenolpyruvate: step 7/7. Catalyzes the anti-1,4-elimination of the C-3 phosphate and the C-6 proR hydrogen from 5-enolpyruvylshikimate-3-phosphate (EPSP) to yield chorismate, which is the branch point compound that serves as the starting substrate for the three terminal pathways of aromatic amino acid biosynthesis. This reaction introduces a second double bond into the aromatic ring system. This chain is Chorismate synthase, found in Chlorobium chlorochromatii (strain CaD3).